The following is a 146-amino-acid chain: 3-dehydroquinate dehydratase (146 aa).

Residue tyrosine 22 is the Proton acceptor of the active site. Asparagine 73, histidine 79, and aspartate 86 together coordinate substrate. The active-site Proton donor is histidine 101. Substrate is bound by residues 102-103 and arginine 112; that span reads IS.

It belongs to the type-II 3-dehydroquinase family. Homododecamer.

It carries out the reaction 3-dehydroquinate = 3-dehydroshikimate + H2O. It functions in the pathway metabolic intermediate biosynthesis; chorismate biosynthesis; chorismate from D-erythrose 4-phosphate and phosphoenolpyruvate: step 3/7. Functionally, catalyzes a trans-dehydration via an enolate intermediate. This chain is 3-dehydroquinate dehydratase (aroQ), found in Corynebacterium pseudotuberculosis (strain C231).